A 697-amino-acid polypeptide reads, in one-letter code: Zinc finger and BTB domain-containing protein 24 (697 aa).

Positions 10-133 (GQLVVHSDAH…AYTDFQNNHS (124 aa)) constitute a BTB domain. A compositionally biased stretch (polar residues) spans 131 to 142 (NHSSPKPTTLNT). 2 disordered regions span residues 131-176 (NHSS…EEKS) and 209-254 (EQIA…SRYS). A DNA-binding region (a.T hook) is located at residues 159 to 171 (KRKRGRPKKVNTL). The span at 212-245 (AAKEKEESEPTCEPSREEEMPVEKDENYDPKTED) shows a compositional bias: basic and acidic residues. 8 consecutive C2H2-type zinc fingers follow at residues 294–316 (ARCK…QRSH), 322–344 (FKCN…TRMH), 350–372 (YTCT…MSLH), 378–400 (FTCD…YRVH), 406–428 (PECK…LRTH), 434–456 (FTCE…IRIH), 462–484 (YSCG…CILH), and 490–512 (FSCP…LKIH). Positions 652 to 697 (QEQTEELHLATSTSDPAQHLQLTQEPGPPPPTHHVPQPTPLGQEQS) are disordered. The span at 677–690 (PGPPPPTHHVPQPT) shows a compositional bias: pro residues.

The protein belongs to the krueppel C2H2-type zinc-finger protein family. Interacts with MN1. As to expression, widely expressed, with highest levels in naive B-cells.

The protein localises to the nucleus. In terms of biological role, may be involved in BMP2-induced transcription. This is Zinc finger and BTB domain-containing protein 24 (ZBTB24) from Homo sapiens (Human).